Here is a 622-residue protein sequence, read N- to C-terminus: 3-(3-hydroxy-phenyl)propionate/3-hydroxycinnamic acid hydroxylase (622 aa).

FAD-binding positions include 20-49 (DVAI…VLEK) and 288-298 (FRVDRVLLAGD).

The protein belongs to the PheA/TfdB FAD monooxygenase family. FAD serves as cofactor.

The enzyme catalyses 3-(3-hydroxyphenyl)propanoate + NADH + O2 + H(+) = 3-(2,3-dihydroxyphenyl)propanoate + NAD(+) + H2O. It carries out the reaction (2E)-3-(3-hydroxyphenyl)prop-2-enoate + NADH + O2 + H(+) = (2E)-3-(2,3-dihydroxyphenyl)prop-2-enoate + NAD(+) + H2O. It functions in the pathway aromatic compound metabolism; 3-phenylpropanoate degradation. Functionally, catalyzes the insertion of one atom of molecular oxygen into position 2 of the phenyl ring of 3-(3-hydroxyphenyl)propionate (3-HPP) and hydroxycinnamic acid (3HCI). The protein is 3-(3-hydroxy-phenyl)propionate/3-hydroxycinnamic acid hydroxylase of Paraburkholderia xenovorans (strain LB400).